Consider the following 279-residue polypeptide: Phycobilisome rod-core linker polypeptide CpcG1 (279 aa).

A PBS-linker domain is found at Ser11–Ala189.

Belongs to the phycobilisome linker protein family. As to quaternary structure, part of the phycobilisome, a hemidiscoidal structure that is composed of two distinct substructures: a core complex and a number of rods radiating from the core.

The protein localises to the cellular thylakoid membrane. In terms of biological role, rod-core linker protein required for attachment of phycocyanin to allophycocyanin in cores of phycobilisomes. Functionally, linker polypeptides determine the state of aggregation and the location of the disk-shaped phycobiliprotein units within the phycobilisome and modulate their spectroscopic properties in order to mediate a directed and optimal energy transfer. In Nostoc sp. (strain PCC 7120 / SAG 25.82 / UTEX 2576), this protein is Phycobilisome rod-core linker polypeptide CpcG1.